The chain runs to 635 residues: Histone-lysine N-methyltransferase Su(var)3-9 (635 aa).

The binds to Su(var)205 and Suvar(3)7 stretch occupies residues glutamate 81 to arginine 188. Disordered stretches follow at residues arginine 123 to glycine 161 and serine 191 to isoleucine 210. Low complexity-rich tracts occupy residues proline 128–serine 139 and arginine 147–glycine 161. The Chromo domain maps to tyrosine 219–alanine 278. The region spanning valine 410–glycine 474 is the Pre-SET domain. Zn(2+) is bound by residues cysteine 412, cysteine 414, cysteine 421, cysteine 427, cysteine 428, cysteine 456, cysteine 460, cysteine 462, and cysteine 466. The 127-residue stretch at valine 477–isoleucine 603 folds into the SET domain. S-adenosyl-L-methionine-binding positions include serine 488 to tryptophan 490, tyrosine 531, and asparagine 560 to histidine 561. The Zn(2+) site is built by cysteine 563, cysteine 623, cysteine 625, and cysteine 630. Residues valine 619 to phenylalanine 635 enclose the Post-SET domain.

This sequence belongs to the class V-like SAM-binding methyltransferase superfamily. Histone-lysine methyltransferase family. Suvar3-9 subfamily. In terms of assembly, interacts with Su(var)205 and Su(var)3-7. Probably associates with HDAC1/Rpd3. Interacts with Rrp6; the interaction promotes association of Rrp6 with a subset of genomic loci.

It is found in the nucleus. It localises to the chromosome. The protein localises to the centromere. The catalysed reaction is L-lysyl(9)-[histone H3] + 3 S-adenosyl-L-methionine = N(6),N(6),N(6)-trimethyl-L-lysyl(9)-[histone H3] + 3 S-adenosyl-L-homocysteine + 3 H(+). Functionally, histone methyltransferase that specifically trimethylates 'Lys-9' of histone H3 using monomethylated H3 'Lys-9' as substrate. H3 'Lys-9' trimethylation represents a specific tag for epigenetic transcriptional repression by recruiting Su(var)205/HP1 to methylated histones. Mainly functions in heterochromatin regions, thereby playing a central role in the establishment of constitutive heterochromatin at pericentric regions. Involved in heterochromatic gene silencing including the modification of position-effect-variegation. The sequence is that of Histone-lysine N-methyltransferase Su(var)3-9 (Su(var)3-9) from Drosophila melanogaster (Fruit fly).